The primary structure comprises 331 residues: Protein RecA (331 aa).

66-73 contacts ATP; that stretch reads GPESSGKT.

It belongs to the RecA family.

It is found in the cytoplasm. Can catalyze the hydrolysis of ATP in the presence of single-stranded DNA, the ATP-dependent uptake of single-stranded DNA by duplex DNA, and the ATP-dependent hybridization of homologous single-stranded DNAs. It interacts with LexA causing its activation and leading to its autocatalytic cleavage. The protein is Protein RecA of Acholeplasma laidlawii.